The sequence spans 380 residues: Alcohol dehydrogenase (380 aa).

Residues Cys-48, Thr-50, His-70, Cys-100, Cys-103, Cys-106, Cys-114, and Cys-178 each coordinate Zn(2+). Positions 50 and 70 each coordinate an alcohol. Thr-50 contributes to the NAD(+) binding site. NAD(+) is bound by residues 203–208 (GLGAVG), Asp-227, Arg-232, Thr-273, Val-296, 296–298 (VGV), Phe-323, and Arg-373.

The protein belongs to the zinc-containing alcohol dehydrogenase family. In terms of assembly, homodimer. Zn(2+) serves as cofactor.

Its subcellular location is the cytoplasm. The catalysed reaction is a primary alcohol + NAD(+) = an aldehyde + NADH + H(+). The enzyme catalyses a secondary alcohol + NAD(+) = a ketone + NADH + H(+). The sequence is that of Alcohol dehydrogenase (ADH) from Malus domestica (Apple).